Consider the following 260-residue polypeptide: Acetyl-coenzyme A carboxylase carboxyl transferase subunit alpha (260 aa).

The CoA carboxyltransferase C-terminal domain maps to Met1–Lys235.

Belongs to the AccA family. As to quaternary structure, acetyl-CoA carboxylase is a heterohexamer composed of biotin carboxyl carrier protein (AccB), biotin carboxylase (AccC) and two subunits each of ACCase subunit alpha (AccA) and ACCase subunit beta (AccD).

Its subcellular location is the cytoplasm. The catalysed reaction is N(6)-carboxybiotinyl-L-lysyl-[protein] + acetyl-CoA = N(6)-biotinyl-L-lysyl-[protein] + malonyl-CoA. Its pathway is lipid metabolism; malonyl-CoA biosynthesis; malonyl-CoA from acetyl-CoA: step 1/1. Its function is as follows. Component of the acetyl coenzyme A carboxylase (ACC) complex. First, biotin carboxylase catalyzes the carboxylation of biotin on its carrier protein (BCCP) and then the CO(2) group is transferred by the carboxyltransferase to acetyl-CoA to form malonyl-CoA. The sequence is that of Acetyl-coenzyme A carboxylase carboxyl transferase subunit alpha from Ruminiclostridium cellulolyticum (strain ATCC 35319 / DSM 5812 / JCM 6584 / H10) (Clostridium cellulolyticum).